A 349-amino-acid polypeptide reads, in one-letter code: DENN domain-containing protein 10 (349 aa).

The 135-residue stretch at 1-135 (MATPELMLSL…TKGICQSDEN (135 aa)) folds into the uDENN domain. The cDENN domain occupies 160 to 294 (QFGMETIILY…ADRSDAQVIK (135 aa)). Residues 296 to 349 (ISVKTKEILSNLMSLADHADNSKLTLECLKQGHYPPATENFLFHLAAAEQLLKI) form the dDENN domain.

It belongs to the DENND10 family.

It is found in the late endosome. In terms of biological role, guanine nucleotide exchange factor (GEF) which may be involved in the regulation of late endocytic pathway homeostasis, including endosomal positioning, maturation and secretion. This chain is DENN domain-containing protein 10 (dennd10), found in Danio rerio (Zebrafish).